Here is a 349-residue protein sequence, read N- to C-terminus: Farnesyl pyrophosphate synthase vrtD (349 aa).

Isopentenyl diphosphate contacts are provided by Lys-53, Arg-56, and Gln-92. Mg(2+) is bound by residues Asp-99 and Asp-103. Arg-108 is a dimethylallyl diphosphate binding site. Arg-109 provides a ligand contact to isopentenyl diphosphate. Positions 196, 197, 236, 253, and 262 each coordinate dimethylallyl diphosphate.

The protein belongs to the FPP/GGPP synthase family. Requires Mg(2+) as cofactor.

It carries out the reaction isopentenyl diphosphate + dimethylallyl diphosphate = (2E)-geranyl diphosphate + diphosphate. The enzyme catalyses isopentenyl diphosphate + (2E)-geranyl diphosphate = (2E,6E)-farnesyl diphosphate + diphosphate. It functions in the pathway secondary metabolite biosynthesis; terpenoid biosynthesis. Functionally, farnesyl pyrophosphate synthase; part of the gene cluster that mediates the biosynthesis of viridicatumtoxin, a tetracycline-like fungal meroterpenoid with a unique, fused spirobicyclic ring system. The first step of the pathway is the production of the malonamoyl-CoA starter unit for the polyketide synthase vrtA. The aldolase vrtJ may be involved in the synthesis of the malonamate substrate for malonamoyl-CoA synthetase vrtB. The polyketide synthase vrtA then may utilize the malonamoyl-CoA starter unit, followed by sequential condensation of eight malonyl-CoA units to form the polyketide backbone. The cyclization of the last ring could be mediated by the lactamase-like protein vrtG. The proposed post-PKS tailoring steps are a hydroxylation at C5 catalyzed the cytochrome P450 monooxygenase vrtE, a hydroxylation at C12a catalyzed by VrtH and/or VrtI, and an O-methylation by the O-methyltransferase vrtF. VrtC is then proposed to catalyze the transfer of a geranyl group synthesized by vrtD to the aromatic C ring of the tetracyclic polyketide intermediate of viridicatumtoxin to yield previridicatumtoxin. Finally, the cytochrome P450 monooxygenase vrtK catalyzes the spirocyclization of the geranyl moiety of previridicatumtoxin to afford viridicatumtoxin. This Penicillium aethiopicum protein is Farnesyl pyrophosphate synthase vrtD.